Reading from the N-terminus, the 1498-residue chain is Transposon Ty3-I Gag-Pol polyprotein (1498 aa).

A CCHC-type zinc finger spans residues 265-282; it reads RLCFYCKKEGHRLNECRA. Catalysis depends on Asp-336, which acts as the For protease activity; shared with dimeric partner. The tract at residues 470 to 490 is disordered; it reads TDPKSAGNRGNPRNTKLSLAP. The region spanning 646 to 823 is the Reverse transcriptase domain; the sequence is LDNKFIVPSK…EETEFLGYSI (178 aa). Residues Asp-712, Asp-774, and Asp-775 each contribute to the Mg(2+) site. Residues 919 to 1037 form the RNase H Ty3/gyspy-type domain; that stretch reads DASKDGIGAV…VADAISRAIY (119 aa). The tract at residues 1132–1171 is integrase-type zinc finger-like; the sequence is HTLFGGHFGVTVTLAKISPIYYWPKLQHSIIQYIRTCVQC. The Integrase catalytic domain maps to 1185–1350; that stretch reads LQPLPIAEGR…SPFEIDLGYL (166 aa). The Mg(2+) site is built by Asp-1201 and Asp-1262.

In terms of assembly, the protease is a homodimer, whose active site consists of two apposed aspartic acid residues. In terms of processing, initially, virus-like particles (VLPs) are composed of the structural unprocessed proteins Gag and Gag-Pol, and also contain the host initiator methionine tRNA (tRNA(i)-Met) which serves as a primer for minus-strand DNA synthesis, and a dimer of genomic Ty RNA. Processing of the polyproteins occurs within the particle and proceeds by an ordered pathway, called maturation. First, the protease (PR) is released by autocatalytic cleavage of the Gag-Pol polyprotein, and this cleavage is a prerequisite for subsequent processing at the remaining sites to release the mature structural and catalytic proteins. Maturation takes place prior to the RT reaction and is required to produce transposition-competent VLPs.

The protein localises to the cytoplasm. Its subcellular location is the nucleus. It carries out the reaction DNA(n) + a 2'-deoxyribonucleoside 5'-triphosphate = DNA(n+1) + diphosphate. The enzyme catalyses Endonucleolytic cleavage to 5'-phosphomonoester.. Functionally, capsid protein (CA) is the structural component of the virus-like particle (VLP), forming the shell that encapsulates the genomic RNA-nucleocapsid complex. In terms of biological role, nucleocapsid protein p11 (NC) forms the nucleocore that coats the retro-elements dimeric RNA. Binds these RNAs through its zinc fingers. Promotes primer tRNA(i)-Met annealing to the multipartite primer-binding site (PBS), dimerization of Ty3 RNA and initiation of reverse transcription. Its function is as follows. The aspartyl protease (PR) mediates the proteolytic cleavages of the Gag and Gag-Pol polyproteins after assembly of the VLP. Reverse transcriptase/ribonuclease H (RT) is a multifunctional enzyme that catalyzes the conversion of the retro-elements RNA genome into dsDNA within the VLP. The enzyme displays a DNA polymerase activity that can copy either DNA or RNA templates, and a ribonuclease H (RNase H) activity that cleaves the RNA strand of RNA-DNA heteroduplexes during plus-strand synthesis and hydrolyzes RNA primers. The conversion leads to a linear dsDNA copy of the retrotransposon that includes long terminal repeats (LTRs) at both ends. Functionally, integrase (IN) targets the VLP to the nucleus, where a subparticle preintegration complex (PIC) containing at least integrase and the newly synthesized dsDNA copy of the retrotransposon must transit the nuclear membrane. Once in the nucleus, integrase performs the integration of the dsDNA into the host genome. The sequence is that of Transposon Ty3-I Gag-Pol polyprotein (TY3B-I) from Saccharomyces cerevisiae (strain ATCC 204508 / S288c) (Baker's yeast).